Reading from the N-terminus, the 385-residue chain is Deoxyguanosinetriphosphate triphosphohydrolase-like protein (385 aa).

Residues R75–N204 enclose the HD domain.

This sequence belongs to the dGTPase family. Type 2 subfamily.

The polypeptide is Deoxyguanosinetriphosphate triphosphohydrolase-like protein (Geobacter sulfurreducens (strain ATCC 51573 / DSM 12127 / PCA)).